We begin with the raw amino-acid sequence, 300 residues long: tRNA dimethylallyltransferase (300 aa).

11 to 18 serves as a coordination point for ATP; sequence GPTAVGKS. 13 to 18 lines the substrate pocket; that stretch reads TAVGKS. The segment at 35–38 is interaction with substrate tRNA; that stretch reads DSIQ.

This sequence belongs to the IPP transferase family. Monomer. Requires Mg(2+) as cofactor.

The enzyme catalyses adenosine(37) in tRNA + dimethylallyl diphosphate = N(6)-dimethylallyladenosine(37) in tRNA + diphosphate. Catalyzes the transfer of a dimethylallyl group onto the adenine at position 37 in tRNAs that read codons beginning with uridine, leading to the formation of N6-(dimethylallyl)adenosine (i(6)A). This chain is tRNA dimethylallyltransferase, found in Borrelia recurrentis (strain A1).